Here is a 365-residue protein sequence, read N- to C-terminus: MDELPYEIWIQIIDLLENPFNMLVSNKYTLSMTKYLKNINSFFMIFVEQGNLSWVKILHSQGYDIRFQNNEALKIACKYGYLEIVKYLYDHGCDIFIDNNFCLKIASERGHLEIVKYLYQNGYKFSNDSKPILDIAAANGHFEIIKYVRLLNPNNINKNGCIRMCWKIDNYDISIISYYYTDNKFKDNIYRATEYGNIEIIKKTWNKFCGNITVSNNLFKIAVVYGHLNIIKYMFKKGHRFPRQSNELIQIACGKGYLDIVKYLHKKGFSIVDSLLNIAGRFGHHDVVEYLYKRLKNVNLQKVITITIENDYLEIVKFFVTKENNPDEIRTYLILAHKHGHNRIIRYFDSLLIMTQQKLQSNLEN.

10 ANK repeats span residues 38-67 (NINS…DIRF), 68-97 (QNNE…DIFI), 99-127 (NNFC…KFSN), 129-158 (SKPI…NINK), 184-213 (KFKD…GNIT), 214-243 (VSNN…RFPR), 245-273 (SNEL…SIVD), 275-298 (LLNI…LKNV), 299-328 (NLQK…NPDE), and 330-361 (RTYL…KLQS).

This is Putative ankyrin repeat protein R903 from Acanthamoeba polyphaga mimivirus (APMV).